We begin with the raw amino-acid sequence, 874 residues long: Coatomer subunit gamma-1 (874 aa).

Positions 1–11 (MLKKFDKKDEE) are enriched in basic and acidic residues. The disordered stretch occupies residues 1–21 (MLKKFDKKDEESGGGSNPLQH). HEAT repeat units lie at residues 64–101 (TEAT…IAED), 283–320 (KELA…KHPS), 322–355 (VTAC…GSES), and 356–392 (SIDR…KYPR). At threonine 594 the chain carries Phosphothreonine. Residues 609–874 (RQEIFQEQLA…PVDIILASVG (266 aa)) form an interaction with ZNF289/ARFGAP2 region.

It belongs to the COPG family. As to quaternary structure, oligomeric complex that consists of at least the alpha, beta, beta', gamma, delta, epsilon and zeta subunits. Interacts with ZNF289/ARFGAP2 through its C-terminal appendage domain. Interacts with EGFR upon EGF treatment; interaction is essential for regulation of EGF-dependent nuclear transport of EGFR by retrograde trafficking from the Golgi to the ER. The coatomer interacts with KDEL receptors; the interaction is important for retrograde trafficking of KDEL-bearing proteins from the Golgi to the endoplasmic reticulum. Interacts with COPB1. Interacts with TMED10 (via C-terminus). Interacts with TMED2, TMED3, TMED7 and TMED9.

It is found in the cytoplasm. Its subcellular location is the cytosol. The protein localises to the golgi apparatus membrane. It localises to the cytoplasmic vesicle. The protein resides in the COPI-coated vesicle membrane. The coatomer is a cytosolic protein complex that binds to dilysine motifs and reversibly associates with Golgi non-clathrin-coated vesicles, which further mediate biosynthetic protein transport from the ER, via the Golgi up to the trans Golgi network. Coatomer complex is required for budding from Golgi membranes, and is essential for the retrograde Golgi-to-ER transport of dilysine-tagged proteins. In mammals, the coatomer can only be recruited by membranes associated to ADP-ribosylation factors (ARFs), which are small GTP-binding proteins; the complex also influences the Golgi structural integrity, as well as the processing, activity, and endocytic recycling of LDL receptors. Required for limiting lipid storage in lipid droplets. Involved in lipid homeostasis by regulating the presence of perilipin family members PLIN2 and PLIN3 at the lipid droplet surface and promoting the association of adipocyte triglyceride lipase (PNPLA2) with the lipid droplet surface to mediate lipolysis. The chain is Coatomer subunit gamma-1 (Copg1) from Rattus norvegicus (Rat).